Here is a 441-residue protein sequence, read N- to C-terminus: Glutamate-1-semialdehyde 2,1-aminomutase (441 aa).

Lys-275 is subject to N6-(pyridoxal phosphate)lysine.

The protein belongs to the class-III pyridoxal-phosphate-dependent aminotransferase family. HemL subfamily. In terms of assembly, homodimer. Pyridoxal 5'-phosphate serves as cofactor.

It is found in the cytoplasm. The enzyme catalyses (S)-4-amino-5-oxopentanoate = 5-aminolevulinate. It functions in the pathway porphyrin-containing compound metabolism; protoporphyrin-IX biosynthesis; 5-aminolevulinate from L-glutamyl-tRNA(Glu): step 2/2. This is Glutamate-1-semialdehyde 2,1-aminomutase from Deinococcus deserti (strain DSM 17065 / CIP 109153 / LMG 22923 / VCD115).